Reading from the N-terminus, the 447-residue chain is Pentatricopeptide repeat-containing protein At3g53170 (447 aa).

10 PPR repeats span residues 93 to 127, 128 to 158, 164 to 198, 199 to 233, 235 to 269, 270 to 304, 305 to 339, 340 to 374, 375 to 409, and 410 to 444; these read RCKT…GLKP, TIDV…MKSV, DVFT…GVGC, STVT…GDSL, DVCT…GVQP, DITT…FFSL, TTVT…GVKP, NSIT…DVVL, DTPF…KCKP, and DKIT…GENL.

It belongs to the PPR family. P subfamily.

The polypeptide is Pentatricopeptide repeat-containing protein At3g53170 (Arabidopsis thaliana (Mouse-ear cress)).